Consider the following 148-residue polypeptide: Probable DNA-directed RNA polymerases I, II, and III subunit RPABC3 (148 aa).

A non-specific ssDNA binding region spans residues 16–40 (DPDGKKFDRVSRYFCDAESFKMELI).

This sequence belongs to the eukaryotic RPB8 RNA polymerase subunit family. As to quaternary structure, component of the RNA polymerase I (Pol I), RNA polymerase II (Pol II) and RNA polymerase III (Pol III) complexes consisting of at least 13, 12 and 17 subunits, respectively. Directly interacts with POLR2A.

Its subcellular location is the nucleus. Functionally, DNA-dependent RNA polymerase catalyzes the transcription of DNA into RNA using the four ribonucleoside triphosphates as substrates. Common component of RNA polymerases I, II and III which synthesize ribosomal RNA precursors, mRNA precursors and many functional non-coding RNAs, and small RNAs, such as 5S rRNA and tRNAs, respectively. This is Probable DNA-directed RNA polymerases I, II, and III subunit RPABC3 from Caenorhabditis briggsae.